A 180-amino-acid polypeptide reads, in one-letter code: YY1-associated factor 2 (180 aa).

Disordered regions lie at residues 1–24 (MGDK…GYWD), 47–120 (GTST…EVTV), and 132–180 (EKTK…GESH). The segment at 19 to 48 (DEGYWDCSVCTFRNSAEAFKCMMCDVRKGT) adopts a RanBP2-type zinc-finger fold. The segment covering 62–73 (QQVTQQFVPPTQ) has biased composition (low complexity). A compositionally biased stretch (basic and acidic residues) spans 74–93 (SKKEKKDKVEKEKSEKETTS). Residues 95 to 105 (KNSHKKTRPRL) are compositionally biased toward basic residues. Low complexity-rich tracts occupy residues 136 to 156 (SPPA…SSSD) and 163 to 174 (SRSSSPRGEASS). Serine 167 bears the Phosphoserine mark.

In terms of assembly, interacts with MYC, MYCN, RNF2/RING1B and YY1. Part of the E2F6.com-1 complex in G0 phase composed of E2F6, MGA, MAX, TFDP1, CBX3, BAT8, EUHMTASE1, RING1, RNF2, MBLR, L3MBTL2 and YAF2.

The protein resides in the nucleus. In terms of biological role, binds to MYC and inhibits MYC-mediated transactivation. Also binds to MYCN and enhances MYCN-dependent transcriptional activation. Increases calpain 2-mediated proteolysis of YY1 in vitro. Component of the E2F6.com-1 complex, a repressive complex that methylates 'Lys-9' of histone H3, suggesting that it is involved in chromatin-remodeling. This chain is YY1-associated factor 2 (YAF2), found in Homo sapiens (Human).